Here is a 631-residue protein sequence, read N- to C-terminus: ATP-dependent zinc metalloprotease FtsH (631 aa).

At 1-5 (MKKSN) the chain is on the cytoplasmic side. Residues 6 to 26 (PWFVFFWITLLVIVLMFINFA) form a helical membrane-spanning segment. At 27–102 (RQGGNEVELE…LEFSATEKSG (76 aa)) the chain is on the periplasmic side. A helical membrane pass occupies residues 103–123 (WLGSLLLNWGPVVLLILFCFW). Over 124–631 (MMRGMSMGNK…KVINEKVIIS (508 aa)) the chain is Cytoplasmic. An ATP-binding site is contributed by 196-203 (GSPGTGKT). His418 serves as a coordination point for Zn(2+). The active site involves Glu419. Zn(2+) is bound by residues His422 and Asp494.

This sequence in the central section; belongs to the AAA ATPase family. It in the C-terminal section; belongs to the peptidase M41 family. As to quaternary structure, homohexamer. Zn(2+) serves as cofactor.

The protein resides in the cell inner membrane. In terms of biological role, acts as a processive, ATP-dependent zinc metallopeptidase for both cytoplasmic and membrane proteins. Plays a role in the quality control of integral membrane proteins. This is ATP-dependent zinc metalloprotease FtsH from Endomicrobium trichonymphae.